The sequence spans 366 residues: Zinc finger CCCH domain-containing protein 11 (366 aa).

A disordered region spans residues 43–66 (LHQAVQPKPDPTKTAAKKKKEEEK). A coiled-coil region spans residues 54-79 (TKTAAKKKKEEEKAREKELNDLFKVA). C3H1-type zinc fingers lie at residues 90-117 (DPKSIVCEFFKVGQCQKGFKCKFSHDLN) and 160-198 (KPTDIVCKYFLDAVEKKQYGWFWVCPNGGKDCHYRHALP). Residues 208–234 (KALLEEESEKIAIEDEIEDQRKKVKTT) are a coiled coil. Residues 293 to 338 (YERQEESEANEEPSNKNQDEGPSSSTSNGKEVEESDDEDINIDDDL) form a disordered region. The span at 312-321 (EGPSSSTSNG) shows a compositional bias: polar residues. Residues 325–338 (EESDDEDINIDDDL) are compositionally biased toward acidic residues.

The sequence is that of Zinc finger CCCH domain-containing protein 11 from Oryza sativa subsp. japonica (Rice).